The primary structure comprises 167 residues: MIFLGLDPGLGTTGWGAITVEGNRLSHIANGQIRTDPSMALARRLALLHDALAAVIASHQPEMAAVEEVLGNSNAQSTLKLGQARGIALFSLAEAGLSVGEYHPNVVKKAVVGTGSADKKQVQAMVSRLLPGVKLAGPDAADALAVAITHAHHHASARGYARRVRAS.

Active-site residues include Asp-7, Glu-67, and Asp-139. Mg(2+) contacts are provided by Asp-7, Glu-67, and Asp-139.

The protein belongs to the RuvC family. In terms of assembly, homodimer which binds Holliday junction (HJ) DNA. The HJ becomes 2-fold symmetrical on binding to RuvC with unstacked arms; it has a different conformation from HJ DNA in complex with RuvA. In the full resolvosome a probable DNA-RuvA(4)-RuvB(12)-RuvC(2) complex forms which resolves the HJ. Requires Mg(2+) as cofactor.

The protein localises to the cytoplasm. It carries out the reaction Endonucleolytic cleavage at a junction such as a reciprocal single-stranded crossover between two homologous DNA duplexes (Holliday junction).. Functionally, the RuvA-RuvB-RuvC complex processes Holliday junction (HJ) DNA during genetic recombination and DNA repair. Endonuclease that resolves HJ intermediates. Cleaves cruciform DNA by making single-stranded nicks across the HJ at symmetrical positions within the homologous arms, yielding a 5'-phosphate and a 3'-hydroxyl group; requires a central core of homology in the junction. The consensus cleavage sequence is 5'-(A/T)TT(C/G)-3'. Cleavage occurs on the 3'-side of the TT dinucleotide at the point of strand exchange. HJ branch migration catalyzed by RuvA-RuvB allows RuvC to scan DNA until it finds its consensus sequence, where it cleaves and resolves the cruciform DNA. The protein is Crossover junction endodeoxyribonuclease RuvC of Zymomonas mobilis subsp. mobilis (strain ATCC 31821 / ZM4 / CP4).